The sequence spans 298 residues: tRNA-cytidine(32) 2-sulfurtransferase (298 aa).

The short motif at 48-53 (SGGKDS) is the PP-loop motif element. [4Fe-4S] cluster contacts are provided by cysteine 123, cysteine 126, and cysteine 214.

The protein belongs to the TtcA family. As to quaternary structure, homodimer. Requires Mg(2+) as cofactor. [4Fe-4S] cluster is required as a cofactor.

Its subcellular location is the cytoplasm. It carries out the reaction cytidine(32) in tRNA + S-sulfanyl-L-cysteinyl-[cysteine desulfurase] + AH2 + ATP = 2-thiocytidine(32) in tRNA + L-cysteinyl-[cysteine desulfurase] + A + AMP + diphosphate + H(+). It participates in tRNA modification. In terms of biological role, catalyzes the ATP-dependent 2-thiolation of cytidine in position 32 of tRNA, to form 2-thiocytidine (s(2)C32). The sulfur atoms are provided by the cysteine/cysteine desulfurase (IscS) system. The polypeptide is tRNA-cytidine(32) 2-sulfurtransferase (Nitrosospira multiformis (strain ATCC 25196 / NCIMB 11849 / C 71)).